The primary structure comprises 705 residues: Prolyl endopeptidase (705 aa).

The N-terminal stretch at 1–20 (MKYKKLSVAVAAFAFAAVSA) is a signal peptide. Active-site charge relay system residues include Ser556 and His675.

It belongs to the peptidase S9A family. In terms of assembly, monomer.

Its subcellular location is the periplasm. The enzyme catalyses Hydrolysis of Pro-|-Xaa &gt;&gt; Ala-|-Xaa in oligopeptides.. Its function is as follows. Cleaves peptide bonds on the C-terminal side of prolyl residues within peptides that are up to approximately 30 amino acids long. Has an absolute requirement for an X-Pro bond in the trans configuration immediately preceding the Pro-Y scissible bond. The sequence is that of Prolyl endopeptidase from Elizabethkingia miricola (Chryseobacterium miricola).